The chain runs to 825 residues: Thioredoxin domain-containing protein 16 (825 aa).

The first 27 residues, 1–27, serve as a signal peptide directing secretion; it reads MFSGFNVFRVGISFVIMCIFYMPTVNS. A Thioredoxin domain is found at 392-495; it reads LTVELTEETF…EDLLKFIQLN (104 aa). The cysteines at positions 449 and 456 are disulfide-linked. Asparagine 460 is a glycosylation site (N-linked (GlcNAc...) asparagine). The segment at 762–787 is disordered; it reads RKVPKCMKETDVQENDKEQHEDKSAV. A compositionally biased stretch (basic and acidic residues) spans 767-787; that stretch reads CMKETDVQENDKEQHEDKSAV. Positions 816-819 match the Mediates endoplasmic reticulum retention motif; that stretch reads DKEL.

As to quaternary structure, interacts with FOXRED2. Glycosylated.

It is found in the secreted. Its subcellular location is the endoplasmic reticulum lumen. In Homo sapiens (Human), this protein is Thioredoxin domain-containing protein 16.